The following is a 246-amino-acid chain: UDP-N-acetyl-D-mannosaminuronic acid transferase (246 aa).

Belongs to the glycosyltransferase 26 family.

It carries out the reaction UDP-N-acetyl-alpha-D-mannosaminouronate + N-acetyl-alpha-D-glucosaminyl-di-trans,octa-cis-undecaprenyl diphosphate = beta-D-ManNAcA-(1-&gt;4)-alpha-D-GlcNAc-di-trans,octa-cis-undecaprenyl diphosphate + UDP + H(+). The protein operates within bacterial outer membrane biogenesis; enterobacterial common antigen biosynthesis. In terms of biological role, catalyzes the synthesis of Und-PP-GlcNAc-ManNAcA (Lipid II), the second lipid-linked intermediate involved in enterobacterial common antigen (ECA) synthesis. The polypeptide is UDP-N-acetyl-D-mannosaminuronic acid transferase (Shigella flexneri).